The sequence spans 341 residues: Putative gustatory receptor 9a (341 aa).

M1 is a topological domain (cytoplasmic). A helical membrane pass occupies residues 2 to 22 (SLWLEHFLTGYFQLCGLVCGW). Residues 23 to 30 (SGSRLGRL) are Extracellular-facing. Residues 31-51 (LSSTFLVLILIELVGEIETYF) form a helical membrane-spanning segment. Residues 52 to 68 (TEENPDNESVPAYFAKV) are Cytoplasmic-facing. A helical transmembrane segment spans residues 69–89 (IMGVNMAYKMIHAWIALSALF). Over 90–113 (ECRRFRYLLEELPPVKATSFIYRH) the chain is Extracellular. Residues 114 to 134 (LILEIILFACNAFLVLSEYTI) form a helical membrane-spanning segment. Residues 135-202 (RGIYLENLRY…LAKVTRSLSH (68 aa)) are Cytoplasmic-facing. A helical membrane pass occupies residues 203–223 (LFGLSLLLLNVLCLGDWIIVC). Over 224 to 233 (NVYFMVAYLQ) the chain is Extracellular. Residues 234-254 (VLPATLFLFGQVMFVVCPTLI) traverse the membrane as a helical segment. The Cytoplasmic segment spans residues 255 to 318 (KIWSICAASH…GIYHLNLQTL (64 aa)). Residues 319–339 (AGMFFFILEALVIFLQFVSLV) traverse the membrane as a helical segment. The Extracellular portion of the chain corresponds to 340–341 (RT).

This sequence belongs to the insect chemoreceptor superfamily. Gustatory receptor (GR) family. Gr2a subfamily. As to expression, expressed in neurons of the terminal external chemosensory organ of larvae.

It is found in the cell membrane. Probable gustatory receptor which mediates acceptance or avoidance behavior, depending on its substrates. This chain is Putative gustatory receptor 9a (Gr9a), found in Drosophila melanogaster (Fruit fly).